Consider the following 147-residue polypeptide: FAD synthase (147 aa).

ATP-binding positions include 13-14 (TF), 18-21 (HEGH), aspartate 100, and phenylalanine 127.

This sequence belongs to the archaeal FAD synthase family. As to quaternary structure, homodimer. A divalent metal cation serves as cofactor.

It catalyses the reaction FMN + ATP + H(+) = FAD + diphosphate. The protein operates within cofactor biosynthesis; FAD biosynthesis; FAD from FMN: step 1/1. Catalyzes the transfer of the AMP portion of ATP to flavin mononucleotide (FMN) to produce flavin adenine dinucleotide (FAD) coenzyme. The sequence is that of FAD synthase from Korarchaeum cryptofilum (strain OPF8).